The chain runs to 484 residues: Suppressor of fused homolog (484 aa).

The segment at 1–24 is disordered; sequence MAELRPSGAPGPTAPPAPGPTAPP. Residues 12–23 are compositionally biased toward pro residues; that stretch reads PTAPPAPGPTAP. Lys257 participates in a covalent cross-link: Glycyl lysine isopeptide (Lys-Gly) (interchain with G-Cter in ubiquitin). Residues 279 to 360 are disordered; it reads SRPPEDDEDS…SSTAIIPHEL (82 aa). Ser301 carries the post-translational modification Phosphoserine. Lys303 is subject to N6-acetyllysine. Residue Lys321 forms a Glycyl lysine isopeptide (Lys-Gly) (interchain with G-Cter in SUMO2) linkage. Residues 336–347 show a composition bias toward basic and acidic residues; the sequence is AHDRAPSRKDSL. A phosphoserine mark is found at Ser342, Ser346, and Ser352. Phosphothreonine is present on Thr353. Ser481 carries the phosphoserine modification.

The protein belongs to the SUFU family. May form homodimers. Part of a DNA-bound corepressor complex containing SAP18, GLI1 and SIN3. Part of a complex containing CTNNB1. Binds BTRC, GLI2, GLI3, SAP18 and STK36. Binds both free and DNA-bound GLI1. Interacts with KIF7. Interacts with GLI3FL and this interaction regulates the formation of either repressor or activator forms of GLI3. Its association with GLI3FL is regulated by Hh signaling and dissociation of the SUFU-GLI3 interaction requires the presence of the ciliary motor KIF3A. Interacts with ULK3; inactivating the protein kinase activity of ULK3. Interacts with RAB23. In terms of processing, polyubiquitinated at Lys-257 by the SCF(FBXL17) complex, leading to its subsequent degradation and allowing the release of GLI1 for proper hedgehog/smoothened signal transduction. Ubiquitination is impaired by phosphorylation at Ser-342, Ser-346, Ser-352 and Thr-353. Post-translationally, phosphorylation at Ser-342, Ser-346, Ser-352 and Thr-353 prevents ubiquitination by the SCF(FBXL17) complex. As to expression, ubiquitous in adult tissues. Detected in osteoblasts of the perichondrium in the developing limb of 12-week old embryos. Isoform 1 is detected in fetal brain, lung, kidney and testis. Isoform 2 is detected in fetal testis, and at much lower levels in fetal brain, lung and kidney.

Its subcellular location is the cytoplasm. It localises to the nucleus. Functionally, negative regulator in the hedgehog/smoothened signaling pathway. Down-regulates GLI1-mediated transactivation of target genes. Down-regulates GLI2-mediated transactivation of target genes. Part of a corepressor complex that acts on DNA-bound GLI1. May also act by linking GLI1 to BTRC and thereby targeting GLI1 to degradation by the proteasome. Sequesters GLI1, GLI2 and GLI3 in the cytoplasm, this effect is overcome by binding of STK36 to both SUFU and a GLI protein. Negative regulator of beta-catenin signaling. Regulates the formation of either the repressor form (GLI3R) or the activator form (GLI3A) of the full-length form of GLI3 (GLI3FL). GLI3FL is complexed with SUFU in the cytoplasm and is maintained in a neutral state. Without the Hh signal, the SUFU-GLI3 complex is recruited to cilia, leading to the efficient processing of GLI3FL into GLI3R. When Hh signaling is initiated, SUFU dissociates from GLI3FL and the latter translocates to the nucleus, where it is phosphorylated, destabilized, and converted to a transcriptional activator (GLI3A). Required for normal embryonic development. Required for the proper formation of hair follicles and the control of epidermal differentiation. This Homo sapiens (Human) protein is Suppressor of fused homolog.